Consider the following 603-residue polypeptide: Isocitrate dehydrogenase kinase/phosphatase (603 aa).

ATP contacts are provided by residues A327–L333 and K348. D383 is an active-site residue.

This sequence belongs to the AceK family.

It is found in the cytoplasm. The enzyme catalyses L-seryl-[isocitrate dehydrogenase] + ATP = O-phospho-L-seryl-[isocitrate dehydrogenase] + ADP + H(+). Bifunctional enzyme which can phosphorylate or dephosphorylate isocitrate dehydrogenase (IDH) on a specific serine residue. This is a regulatory mechanism which enables bacteria to bypass the Krebs cycle via the glyoxylate shunt in response to the source of carbon. When bacteria are grown on glucose, IDH is fully active and unphosphorylated, but when grown on acetate or ethanol, the activity of IDH declines drastically concomitant with its phosphorylation. In Burkholderia mallei (strain ATCC 23344), this protein is Isocitrate dehydrogenase kinase/phosphatase.